A 45-amino-acid chain; its full sequence is Somatoliberin (45 aa).

The protein belongs to the glucagon family.

It is found in the secreted. Functionally, GRF is released by the hypothalamus and acts on the adenohypophyse to stimulate the secretion of growth hormone. In Cyprinus carpio (Common carp), this protein is Somatoliberin (ghrh).